Reading from the N-terminus, the 408-residue chain is MAGTFVSVLDISGDSVVTGPVPVEPFVPGSANLFPKMTSRINDTAWELWEFEGFSAGGEAAVGVSLYRDARGVDKGGFHAEVNAIWPDGRKWGQTLYFAESIVTAEGASPDEGRIHGFWRSNSNTAGGAPAAARSITFSISEDLGVATVCFSVPDQVTGTIELRSSGSNRKSCLPATEEAALLYPSVYYMFPMGPVDANADLTFSFSATAGGEIEEERKLSVQSRGGGHGGMVRGWSTEAWPQFMNDAYYVVAKVGSYMLQMLRVVGSAAAGHRPYAVARLYLNKELVCAANQAVDAQSAAEGSTATTQPRDMVAVEKVLSEPKSQEQVVSGAFSDKNIGYVIEFISGQQKRWRFDARHKRAWWSEPTSAPGPGCTGKSGWIEGFLGGSDGETFEGAGVGGQLQIPVP.

This sequence belongs to the Diels-Alderase family.

The protein operates within mycotoxin biosynthesis. Diels-Alderase; part of the gene cluster that mediates the biosynthesis of pyrrolocin, a bright yellow trans-fused decalin-containing tetramic acid with antimicrobial activity. The PKS module of prlS together with the enoylreductase prlC catalyze the formation of the polyketide unit which is then conjugated to L-serine by the condensation domain of the prlS NRPS module. Diels-Alderase gNR600 is involved in endo-selective Diels-Alder cycloaddition to form the decalin ring. Subsequent methylation is carried leads to pyrrolocin A. The methyltransferase involved in that last step has not been identified yet and is probably located outside of the prl cluster. The sequence is that of Diels-Alderase gNR600 from Fungal sp. (strain NRRL 50135).